Reading from the N-terminus, the 517-residue chain is GMP synthase [glutamine-hydrolyzing] (517 aa).

The Glutamine amidotransferase type-1 domain maps to K9–D202. Residue C86 is the Nucleophile of the active site. Catalysis depends on residues H176 and E178. A GMPS ATP-PPase domain is found at W203–R392. Residue S230–S236 participates in ATP binding.

As to quaternary structure, homodimer.

The catalysed reaction is XMP + L-glutamine + ATP + H2O = GMP + L-glutamate + AMP + diphosphate + 2 H(+). Its pathway is purine metabolism; GMP biosynthesis; GMP from XMP (L-Gln route): step 1/1. In terms of biological role, catalyzes the synthesis of GMP from XMP. The sequence is that of GMP synthase [glutamine-hydrolyzing] from Streptococcus mutans serotype c (strain ATCC 700610 / UA159).